Consider the following 408-residue polypeptide: Succinylornithine transaminase (408 aa).

Lysine 252 is modified (N6-(pyridoxal phosphate)lysine).

Belongs to the class-III pyridoxal-phosphate-dependent aminotransferase family. AstC subfamily. The cofactor is pyridoxal 5'-phosphate.

It catalyses the reaction N(2)-succinyl-L-ornithine + 2-oxoglutarate = N-succinyl-L-glutamate 5-semialdehyde + L-glutamate. It functions in the pathway amino-acid degradation; L-arginine degradation via AST pathway; L-glutamate and succinate from L-arginine: step 3/5. Functionally, catalyzes the transamination of N(2)-succinylornithine and alpha-ketoglutarate into N(2)-succinylglutamate semialdehyde and glutamate. Can also act as an acetylornithine aminotransferase. The sequence is that of Succinylornithine transaminase from Salmonella heidelberg (strain SL476).